A 344-amino-acid polypeptide reads, in one-letter code: MQTLTIIRPDDMHLHLRDGDALKAVAPYTARQMGRAVIMPNLKPPVVSVADALAYKARIMAALPEGSAFEPLMTLYLTDQATPELVREAKAAGIVAFKLYPAGATTNSDSGVTDLFKLIPVLEEMAKQGILFLVHGEVTDPEIDIFDREAAFIGRVMKPVLAQVPNLKVVFEHITTAEAARLVLEAGDNVAATVTPQHLLLNRNDLLVGGVRPHHFCLPVLKRETHRQALVAAVTGEKAHKFFLGTDSAPHAKSAKENACGCAGMFSAMTAIELYAEVFEKAGALDKLEAFASKNGARFYGIPENADTITLVKQSQTVPASVPYGDGELVPMRAGGEIGWTVQY.

Residues histidine 13 and histidine 15 each contribute to the Zn(2+) site. Substrate-binding positions include 15-17 (HLR) and asparagine 41. Residues lysine 98, histidine 135, and histidine 173 each coordinate Zn(2+). Lysine 98 carries the N6-carboxylysine modification. Histidine 135 is a binding site for substrate. Leucine 218 serves as a coordination point for substrate. Aspartate 247 lines the Zn(2+) pocket. Aspartate 247 is an active-site residue. Substrate is bound by residues histidine 251 and alanine 263.

This sequence belongs to the metallo-dependent hydrolases superfamily. DHOase family. Class II DHOase subfamily. In terms of assembly, homodimer. Zn(2+) serves as cofactor.

The enzyme catalyses (S)-dihydroorotate + H2O = N-carbamoyl-L-aspartate + H(+). The protein operates within pyrimidine metabolism; UMP biosynthesis via de novo pathway; (S)-dihydroorotate from bicarbonate: step 3/3. Functionally, catalyzes the reversible cyclization of carbamoyl aspartate to dihydroorotate. The chain is Dihydroorotase from Neisseria gonorrhoeae (strain ATCC 700825 / FA 1090).